Consider the following 117-residue polypeptide: MATKQGTPKVFHKMHVKTGDTVQVIAGKDKGKIGEIVQALPQLSKVIVKGVNIKTKHVKPQQEGESGRIVTQEFPIHSSNVMLYSTKQNVASRVCYTFTSEGKKVRKLKKTGEILDK.

It belongs to the universal ribosomal protein uL24 family. Part of the 50S ribosomal subunit.

One of two assembly initiator proteins, it binds directly to the 5'-end of the 23S rRNA, where it nucleates assembly of the 50S subunit. In terms of biological role, one of the proteins that surrounds the polypeptide exit tunnel on the outside of the subunit. This Nostoc punctiforme (strain ATCC 29133 / PCC 73102) protein is Large ribosomal subunit protein uL24.